Consider the following 270-residue polypeptide: MIEQNEKASIGIIGGSGLYDPGIFSESKEIKVYTPYGQPSDFITIGKIGNKSVAFLPRHGRGHRIPPHKINYRANIWALKELGVRWVISVSAVGSLRMDYKLGDFVIPDQFIDMTKNREYSFFDGPVVAHVSMADPFCNSLRKLAIETAKELNIKTHESGTYICIEGPRFSTRAESRTWREVYKADIIGMTLVPEVNLACEAQMCYATIAMVTDYDVFAEIPVTAEEVTRVMAENTEKAKKLLYALIQKLPEKPEEGSCSCCNSLKTALV.

Phosphate contacts are provided by residues Ser16, 58–59, and 91–92; these read RH and SA. Disulfide bonds link Cys138–Cys205, Cys200–Cys262, and Cys259–Cys261. Met190 lines the substrate pocket. Phosphate is bound at residue Thr191. 214–216 lines the substrate pocket; sequence DYD.

The protein belongs to the PNP/MTAP phosphorylase family. MTAP subfamily. As to quaternary structure, homohexamer. Dimer of a homotrimer.

The enzyme catalyses S-methyl-5'-thioadenosine + phosphate = 5-(methylsulfanyl)-alpha-D-ribose 1-phosphate + adenine. Its pathway is amino-acid biosynthesis; L-methionine biosynthesis via salvage pathway; S-methyl-5-thio-alpha-D-ribose 1-phosphate from S-methyl-5'-thioadenosine (phosphorylase route): step 1/1. Functionally, catalyzes the reversible phosphorylation of S-methyl-5'-thioadenosine (MTA) to adenine and 5-methylthioribose-1-phosphate. Involved in the breakdown of MTA, a major by-product of polyamine biosynthesis. Responsible for the first step in the methionine salvage pathway after MTA has been generated from S-adenosylmethionine. Has broad substrate specificity with 6-aminopurine nucleosides as preferred substrates. This is S-methyl-5'-thioadenosine phosphorylase from Saccharolobus solfataricus (strain ATCC 35092 / DSM 1617 / JCM 11322 / P2) (Sulfolobus solfataricus).